We begin with the raw amino-acid sequence, 297 residues long: RNA polymerase sigma-F factor (297 aa).

A disordered region spans residues 1-46 (MTVPASTAPQVPPQQDPQVPHPQEPREEPHEEPPSPPAAPRPQSRG). Pro residues predominate over residues 10–22 (QVPPQQDPQVPHP). Positions 23-33 (QEPREEPHEEP) are enriched in basic and acidic residues. A Polymerase core binding motif is present at residues 101–114 (DVVQVGTIGLINAI). A DNA-binding region (H-T-H motif) is located at residues 264–283 (QSQISAELGVSQMHVSRLLA).

It belongs to the sigma-70 factor family. SigB subfamily.

Its function is as follows. Sigma factors are initiation factors that promote the attachment of RNA polymerase to specific initiation sites and are then released. This sigma factor is required for normal spore maturation. The protein is RNA polymerase sigma-F factor (sigF) of Kitasatospora aureofaciens (Streptomyces aureofaciens).